The chain runs to 248 residues: Granzyme-like protein 2 (248 aa).

An N-terminal signal peptide occupies residues 1-18 (MFLFLIFLVAVLPVNTEG). A propeptide spans 19–20 (GE) (activation peptide). Positions 21-243 (IVWGTESKPH…FIPWIQKTMK (223 aa)) constitute a Peptidase S1 domain. Cys-50 and Cys-66 are disulfide-bonded. Residues His-65 and Asp-108 each act as charge relay system in the active site. Intrachain disulfides connect Cys-142–Cys-207 and Cys-172–Cys-186. 2 N-linked (GlcNAc...) asparagine glycosylation sites follow: Asn-152 and Asn-180. Ser-201 functions as the Charge relay system in the catalytic mechanism.

It belongs to the peptidase S1 family. Granzyme subfamily. As to expression, duodenum, lung and spleen.

Functionally, this enzyme is necessary for target cell lysis in cell-mediated immune responses. This chain is Granzyme-like protein 2, found in Rattus norvegicus (Rat).